We begin with the raw amino-acid sequence, 319 residues long: ATP-dependent 6-phosphofructokinase (319 aa).

G11 serves as a coordination point for ATP. Residue 21–25 coordinates ADP; sequence RAVVR. ATP is bound by residues 72–73 and 102–105; these read RC and GDGS. Mg(2+) is bound at residue D103. 125–127 is a substrate binding site; sequence TID. The active-site Proton acceptor is D127. Residue R154 coordinates ADP. Substrate-binding positions include R162 and 169–171; that span reads MGR. ADP is bound by residues 185–187, R211, and 213–215; these read GAE and KKH. Residues E222, R243, and 249-252 each bind substrate; that span reads HIQR.

This sequence belongs to the phosphofructokinase type A (PFKA) family. ATP-dependent PFK group I subfamily. Prokaryotic clade 'B1' sub-subfamily. Homotetramer. Mg(2+) is required as a cofactor.

It is found in the cytoplasm. The enzyme catalyses beta-D-fructose 6-phosphate + ATP = beta-D-fructose 1,6-bisphosphate + ADP + H(+). Its pathway is carbohydrate degradation; glycolysis; D-glyceraldehyde 3-phosphate and glycerone phosphate from D-glucose: step 3/4. Allosterically activated by ADP and other diphosphonucleosides, and allosterically inhibited by phosphoenolpyruvate. Catalyzes the phosphorylation of D-fructose 6-phosphate to fructose 1,6-bisphosphate by ATP, the first committing step of glycolysis. This Halalkalibacterium halodurans (strain ATCC BAA-125 / DSM 18197 / FERM 7344 / JCM 9153 / C-125) (Bacillus halodurans) protein is ATP-dependent 6-phosphofructokinase.